Consider the following 274-residue polypeptide: 2,3,4,5-tetrahydropyridine-2,6-dicarboxylate N-succinyltransferase (274 aa).

The protein belongs to the transferase hexapeptide repeat family.

Its subcellular location is the cytoplasm. The enzyme catalyses (S)-2,3,4,5-tetrahydrodipicolinate + succinyl-CoA + H2O = (S)-2-succinylamino-6-oxoheptanedioate + CoA. It functions in the pathway amino-acid biosynthesis; L-lysine biosynthesis via DAP pathway; LL-2,6-diaminopimelate from (S)-tetrahydrodipicolinate (succinylase route): step 1/3. The sequence is that of 2,3,4,5-tetrahydropyridine-2,6-dicarboxylate N-succinyltransferase from Yersinia pseudotuberculosis serotype IB (strain PB1/+).